The primary structure comprises 148 residues: Endoribonuclease YbeY (148 aa).

The Zn(2+) site is built by H105, H109, and D115.

This sequence belongs to the endoribonuclease YbeY family. Zn(2+) is required as a cofactor.

The protein resides in the cytoplasm. In terms of biological role, single strand-specific metallo-endoribonuclease involved in late-stage 70S ribosome quality control and in maturation of the 3' terminus of the 16S rRNA. The polypeptide is Endoribonuclease YbeY (Chlorobium phaeovibrioides (strain DSM 265 / 1930) (Prosthecochloris vibrioformis (strain DSM 265))).